The sequence spans 252 residues: Hsp70-Hsp90 organising protein (252 aa).

3 TPR repeats span residues 7-40 (AQRLKELGNKCFQEGKYEEAVKYFSDAITNDPLD), 41-74 (HVLYSNLSGAFASLGRFYEALESANKCISIKKDW), and 75-108 (PKGYIRKGCAEHGLRQLSNAEKTYLEGLKIDPNN). Residues 197 to 239 (EGNDAEERQRQQREEEERRKKKEEEERKKKEEEEMKKQNRTPE) adopt a coiled-coil conformation. The disordered stretch occupies residues 199–252 (NDAEERQRQQREEEERRKKKEEEERKKKEEEEMKKQNRTPEQIQGDEHKLKVMN). Composition is skewed to basic and acidic residues over residues 201-233 (AEERQRQQREEEERRKKKEEEERKKKEEEEMKK) and 243-252 (GDEHKLKVMN).

Monomer. Homodimer. Forms a complex composed of HOP and chaperones HSP70 and HSP90; the interaction is stronger in the absence of ATP. Interacts (via TPR 1, 2, 3, 7, 8 and 9 repeats) with HSP70 (via C-terminus); the interaction is direct and is stronger in the absence of ATP. Interacts (via TPR 4, 5 and 6 repeats) with HSP90 (via C-terminus); the interaction is direct.

The protein localises to the cytoplasm. Acts as a co-chaperone and mediates the association of the chaperones HSP70 and HSP90 probably facilitating substrate transfer from HSP70 to HSP90. Stimulates HSP70 ATPase activity and, in contrast, inhibits HSP90 ATPase activity. The sequence is that of Hsp70-Hsp90 organising protein from Plasmodium falciparum.